Here is a 360-residue protein sequence, read N- to C-terminus: Glutamate 5-kinase (360 aa).

Residue Lys7 participates in ATP binding. Substrate-binding residues include Ser47, Asp134, and Asn146. Residues 166 to 167 (TD) and 210 to 216 (TGGISTK) contribute to the ATP site. The region spanning 275-356 (VGKITLDDGA…SSIIVVHRDV (82 aa)) is the PUA domain.

Belongs to the glutamate 5-kinase family.

The protein resides in the cytoplasm. It carries out the reaction L-glutamate + ATP = L-glutamyl 5-phosphate + ADP. Its pathway is amino-acid biosynthesis; L-proline biosynthesis; L-glutamate 5-semialdehyde from L-glutamate: step 1/2. Catalyzes the transfer of a phosphate group to glutamate to form L-glutamate 5-phosphate. The sequence is that of Glutamate 5-kinase from Prochlorococcus marinus (strain AS9601).